Consider the following 404-residue polypeptide: Cysteine desulfurase IscS (404 aa).

Pyridoxal 5'-phosphate is bound by residues 75–76, Asn155, Gln183, and 203–205; these read AT and SGH. Lys206 carries the N6-(pyridoxal phosphate)lysine modification. Residue Thr243 participates in pyridoxal 5'-phosphate binding. Cys328 functions as the Cysteine persulfide intermediate in the catalytic mechanism. Cys328 is a [2Fe-2S] cluster binding site.

This sequence belongs to the class-V pyridoxal-phosphate-dependent aminotransferase family. NifS/IscS subfamily. Homodimer. Forms a heterotetramer with IscU, interacts with other sulfur acceptors. Pyridoxal 5'-phosphate serves as cofactor.

The protein resides in the cytoplasm. The catalysed reaction is (sulfur carrier)-H + L-cysteine = (sulfur carrier)-SH + L-alanine. It functions in the pathway cofactor biosynthesis; iron-sulfur cluster biosynthesis. Its function is as follows. Master enzyme that delivers sulfur to a number of partners involved in Fe-S cluster assembly, tRNA modification or cofactor biosynthesis. Catalyzes the removal of elemental sulfur and selenium atoms from cysteine and selenocysteine to produce alanine. Functions as a sulfur delivery protein for Fe-S cluster synthesis onto IscU, an Fe-S scaffold assembly protein, as well as other S acceptor proteins. Also functions as a selenium delivery protein in the pathway for the biosynthesis of selenophosphate. This is Cysteine desulfurase IscS from Salmonella paratyphi C (strain RKS4594).